Reading from the N-terminus, the 581-residue chain is Semenogelin-2 (581 aa).

A signal peptide spans 1 to 23 (MKSIILFVLSLLLILEKQAAVMG). Disordered stretches follow at residues 24–62 (QKGGSKGQSPSGSSQFPHGQKGQHYFGQKDQQHTKSKGS), 132–157 (GGKAHRGTQNPSQDQGNSPSGRGISS), 173–194 (KEQASASGAQKGRTQGRSQSSY), and 271–581 (NLNQ…PIST). Composition is skewed to polar residues over residues 138-157 (GTQNPSQDQGNSPSGRGISS) and 174-194 (EQASASGAQKGRTQGRSQSSY). Basic and acidic residues predominate over residues 291–310 (HTEERQLNHGEKSVQKDISK). Polar residues predominate over residues 324-333 (KSQNQVTIHS). Positions 334–344 (QDQEHGHKENK) are enriched in basic and acidic residues. Over residues 366-396 (KSVSKGSISIQTEEQIHGKSQNQVRIPSQAQ) the composition is skewed to polar residues. 2 stretches are compositionally biased toward basic and acidic residues: residues 412 to 425 (TEERRLNSGEKDIQ) and 455 to 464 (DQEHGHKENK). Composition is skewed to polar residues over residues 481–497 (GKNTQKDVSQSSISFQT) and 505–529 (SQIQTPNPNQDQWSGQNAKGKSGQS). Composition is skewed to basic and acidic residues over residues 530–545 (ADREQDLLSHEQKGRY) and 558–581 (TEHEVARDDHLTQQYNEDRNPIST).

This sequence belongs to the semenogelin family. As to quaternary structure, interacts with SERPINA5.

Its subcellular location is the secreted. Participates in the formation of a gel matrix (sperm coagulum) entrapping the accessory gland secretions and ejaculated spermatozoa. This chain is Semenogelin-2 (SEMG2), found in Pongo abelii (Sumatran orangutan).